The sequence spans 315 residues: Protein OPG185 (315 aa).

The first 16 residues, 1–16 (MTRLPILLLLISLVYA), serve as a signal peptide directing secretion. Residues 17–121 (TPFPQTSKKI…NDTDKVDYEE (105 aa)) form the Ig-like V-type domain. Over 17-279 (TPFPQTSKKI…SNYKTKDFVE (263 aa)) the chain is Virion surface. A disulfide bridge links C34 with C103. N-linked (GlcNAc...) asparagine; by host glycosylation is found at N37, N69, N112, and N161. Positions 191–202 (SINTVSASSGES) are enriched in polar residues. Positions 191-213 (SINTVSASSGESTTDETPEPITD) are disordered. N254 carries N-linked (GlcNAc...) asparagine; by host glycosylation. A helical transmembrane segment spans residues 280–303 (IFGITALIILSAVAIFCITYYIYN). At 304 to 315 (KRSRKYKTENKV) the chain is on the intravirion side.

Belongs to the orthopoxvirus OPG185 family. In terms of assembly, heterodimerizes with OPG040. The heterodimer OPG185-OPG040 interacts with components of the entry fusion complex OPG143 and OPG094. Heterodimer with C3/VPC protein; disulfide-linked. Post-translationally, glycosylated; contains phosphate and sulfate-substituted glycans. O-glycosylation is required for hemagglutination and hemadsorption activities of infected cell membranes.

Its subcellular location is the virion membrane. It localises to the host membrane. Functionally, prevents cell to cell fusion by interacting with and directing the viral OPG040 protein on the host plasma membrane. The OPG185-OPG040 complex associates with components of the entry fusion complex (EFC) presumably to avoid superinfection and syncytium formation. Via its interaction with C3/VCP protein, protects the infected cell and probably also the extracellular enveloped virus from complement attack. The chain is Protein OPG185 (OPG185) from Homo sapiens (Human).